The chain runs to 209 residues: High-affinity nitrate transporter 3.2 (209 aa).

Residues methionine 1–glycine 22 form the signal peptide. The chain crosses the membrane as a helical span at residues leucine 177 to valine 197.

This sequence belongs to the NAR2 family. Bearly detected in roots and shoots.

The protein localises to the cell membrane. In terms of biological role, acts as a dual component transporter with NTR2.1. Required for high-affinity nitrate transport. This is High-affinity nitrate transporter 3.2 from Arabidopsis thaliana (Mouse-ear cress).